A 402-amino-acid polypeptide reads, in one-letter code: Opaque-phase-specific protein OP4 (402 aa).

The N-terminal stretch at 1–20 is a signal peptide; sequence MKFSQATILAIFASSALVSA. N-linked (GlcNAc...) asparagine glycans are attached at residues Asn-140 and Asn-293. Positions 302-322 are disordered; the sequence is NNAGSSSKPTGTTTASTATAA. Residues 304–322 are compositionally biased toward low complexity; sequence AGSSSKPTGTTTASTATAA.

This is Opaque-phase-specific protein OP4 (OPS4) from Candida albicans (strain WO-1) (Yeast).